Here is a 679-residue protein sequence, read N- to C-terminus: MVKNLLVELGLEEMPAYVVTPSMKQLRDKMGAFLTDHRLTFEKIEMFSTPRRLAVRVVGLADKQSDLTEDFKGPSKKIALDADGNFTKAAEGFVRGKGLTVEDITFREIKGEEYVYVTKEEIGRPVEEIIPAVTEVLQALTFPVSMHWANNTFEYIRPVHTLTVLLDEQAFDLDFLDIKSGRTSRGHRFLGQETEIASADSYEDDLRAQFVIASPLERGDMIVDQIQALEEEHGVSIEIDEDLLNEVLNLVEYPTAFLGNFDAKYLEVPEEVLVTSMKEHQRYFVVRDSEGKLLPHFISVRNGNAEHLENVIKGNEKVLVARLEDGEFFWREDQKLAIADLVEKLNNVTFHEKIGSLAEHMERTGKIAALLAQEAGLDADETADLARAAAIYKFDLLTGMVGEFDELQGIMGEKYALLAGENAAVAAAIREHYMPTSADGELPDTKVGAVLALADKLDTILSFFSVGLIPSGSNDPYALRRATQGVVRILDKFGWNIDLAQLLGRLYELKFDSLSYDNQEAVLDFFRARVEKMMDRSIPKDIVTAVLQSTHFVVRDLVETAALLAEKAQEDNFKSAVESLSRVFNLAEKAQGQTAVNPALFENKEEKDLAAAIEKVVLTSDLAANLDQFFALSPVIDAFFDHTMVMAEDEAVRNNRLALLASLTAKAGQIAQFNQINTK.

This sequence belongs to the class-II aminoacyl-tRNA synthetase family. Tetramer of two alpha and two beta subunits.

The protein resides in the cytoplasm. The enzyme catalyses tRNA(Gly) + glycine + ATP = glycyl-tRNA(Gly) + AMP + diphosphate. This chain is Glycine--tRNA ligase beta subunit, found in Streptococcus gordonii (strain Challis / ATCC 35105 / BCRC 15272 / CH1 / DL1 / V288).